We begin with the raw amino-acid sequence, 219 residues long: Oligoribonuclease (219 aa).

One can recognise an Exonuclease domain in the interval Leu-19–Leu-184. Tyr-141 is a catalytic residue.

This sequence belongs to the oligoribonuclease family.

The protein resides in the cytoplasm. Functionally, 3'-to-5' exoribonuclease specific for small oligoribonucleotides. This chain is Oligoribonuclease, found in Corynebacterium glutamicum (strain R).